The chain runs to 192 residues: Vascular endothelial growth factor A (192 aa).

The first 26 residues, 1–26 (MNFLLTWIHWGLAALLYFHNAKVLQA), serve as a signal peptide directing secretion. Disulfide bonds link cysteine 52/cysteine 94, cysteine 83/cysteine 128, and cysteine 87/cysteine 130. Residue asparagine 101 is glycosylated (N-linked (GlcNAc...) asparagine).

Belongs to the PDGF/VEGF growth factor family. Homodimer; disulfide-linked. Also found as heterodimer with PGF. Interacts with FLT1/VEGFR1 and KDR/VEGFR2 receptors, heparan sulfate and heparin. In terms of tissue distribution, expressed by the venom gland, and probably other tissues.

It localises to the secreted. Its function is as follows. Growth factor active in angiogenesis, vasculogenesis and endothelial cell growth. Induces endothelial cell proliferation, promotes cell migration, inhibits apoptosis and induces permeabilization of blood vessels. This is Vascular endothelial growth factor A from Agkistrodon piscivorus piscivorus (Eastern cottonmouth).